The following is a 313-amino-acid chain: Urease accessory protein UreD (313 aa).

The disordered stretch occupies residues 1-30 (MTDLSFPGQAASPGEGAGQTPSGGSGHRFD). Residues 15 to 26 (EGAGQTPSGGSG) show a composition bias toward gly residues.

It belongs to the UreD family. In terms of assembly, ureD, UreF and UreG form a complex that acts as a GTP-hydrolysis-dependent molecular chaperone, activating the urease apoprotein by helping to assemble the nickel containing metallocenter of UreC. The UreE protein probably delivers the nickel.

Its subcellular location is the cytoplasm. In terms of biological role, required for maturation of urease via the functional incorporation of the urease nickel metallocenter. This chain is Urease accessory protein UreD, found in Chromohalobacter salexigens (strain ATCC BAA-138 / DSM 3043 / CIP 106854 / NCIMB 13768 / 1H11).